A 76-amino-acid chain; its full sequence is uncharacterized protein (76 aa).

This is an uncharacterized protein from Human cytomegalovirus (strain AD169) (HHV-5).